The sequence spans 808 residues: Phospholipase D alpha 1 (808 aa).

Residues 1–30 constitute a propeptide that is removed on maturation; that stretch reads MAQISLHGTLHVTIYEVDKLHSGGGPHFFR. One can recognise a C2 domain in the interval 1-125; it reads MAQISLHGTL…LDGEEIDRWV (125 aa). Aspartate 186 serves as a coordination point for Ca(2+). Positions 326 to 364 constitute a PLD phosphodiesterase 1 domain; the sequence is TMFTHHQKIVVVDSAMPNGDSQRRRIVSFVGGLDLCDGR. Active-site residues include histidine 331, lysine 333, and aspartate 338. Histidine 331 is a binding site for a 1,2-diacyl-sn-glycero-3-phosphate. Ca(2+)-binding residues include histidine 370 and histidine 404. A 1,2-diacyl-sn-glycero-3-phosphate-binding residues include glutamine 520 and histidine 659. Positions 654–681 constitute a PLD phosphodiesterase 2 domain; it reads FMIYVHTKMMIVDDEYIIIGSANINQRS. Residues histidine 659, lysine 661, and aspartate 666 contribute to the active site. Residue glutamate 720 participates in Ca(2+) binding.

Belongs to the phospholipase D family. C2-PLD subfamily. Ca(2+) is required as a cofactor. In terms of tissue distribution, expression is higher in radicle than in endosperm.

The protein localises to the cytoplasm. The protein resides in the membrane. It is found in the vacuole. It localises to the endoplasmic reticulum. Its subcellular location is the plastid. The protein localises to the cell membrane. It carries out the reaction a 1,2-diacyl-sn-glycero-3-phosphocholine + H2O = a 1,2-diacyl-sn-glycero-3-phosphate + choline + H(+). In terms of biological role, hydrolyzes glycerol-phospholipids at the terminal phosphodiesteric bond. Plays an important role in various cellular processes, including phytohormone action, vesicular trafficking, secretion, cytoskeletal arrangement, meiosis, tumor promotion, pathogenesis, membrane deterioration and senescence. The sequence is that of Phospholipase D alpha 1 (PLD1) from Ricinus communis (Castor bean).